Here is an 80-residue protein sequence, read N- to C-terminus: Large ribosomal subunit protein bL31 (80 aa).

This sequence belongs to the bacterial ribosomal protein bL31 family. Type A subfamily. Part of the 50S ribosomal subunit.

Its function is as follows. Binds the 23S rRNA. In Nostoc punctiforme (strain ATCC 29133 / PCC 73102), this protein is Large ribosomal subunit protein bL31.